Here is a 790-residue protein sequence, read N- to C-terminus: Alpha,alpha-trehalose-phosphate synthase [UDP-forming] B (790 aa).

This sequence in the N-terminal section; belongs to the glycosyltransferase 20 family. It in the C-terminal section; belongs to the trehalose phosphatase family.

It catalyses the reaction D-glucose 6-phosphate + UDP-alpha-D-glucose = alpha,alpha-trehalose 6-phosphate + UDP + H(+). Its function is as follows. Synthesizes trehalose 6-phosphate, the precursor for the production of trehalose, the main carbohydrate storage reserve of the dormant spore. Trehalose accumulates in both prestalk and prespore cells and then is rapidly metabolized during terminal differentiation of stalk cells, while being stored in spores, where it serves as the principal energy and carbon source for germination. In Dictyostelium discoideum (Social amoeba), this protein is Alpha,alpha-trehalose-phosphate synthase [UDP-forming] B (tpsB).